Reading from the N-terminus, the 393-residue chain is Synaptic vesicle membrane protein VAT-1 homolog (393 aa).

The segment at 1-40 (MSDEREVAEAATGEDASSPPPKTEAASDPQHPAASEGAAA) is disordered. Ser2 bears the N-acetylserine mark. Residues Ser2, Ser18, Ser27, Ser35, and Ser44 each carry the phosphoserine modification.

It belongs to the zinc-containing alcohol dehydrogenase family. Quinone oxidoreductase subfamily. As to expression, expressed in brain. Also expressed in glioblastoma cells.

The protein localises to the cytoplasm. It is found in the mitochondrion outer membrane. Possesses ATPase activity. Plays a part in calcium-regulated keratinocyte activation in epidermal repair mechanisms. Has no effect on cell proliferation. Negatively regulates mitochondrial fusion in cooperation with mitofusin proteins (MFN1-2). This Homo sapiens (Human) protein is Synaptic vesicle membrane protein VAT-1 homolog (VAT1).